Reading from the N-terminus, the 63-residue chain is MKASELKEKSVEELQQTQIELLEEQFKLRMKSASGQISKTHELGTVRRNIARVKTILREKQGN.

This sequence belongs to the universal ribosomal protein uL29 family.

This is Large ribosomal subunit protein uL29 from Alcanivorax borkumensis (strain ATCC 700651 / DSM 11573 / NCIMB 13689 / SK2).